The chain runs to 418 residues: D-amino acid dehydrogenase (418 aa).

3–17 lines the FAD pocket; it reads VLILGSGVVGVATAY.

Belongs to the DadA oxidoreductase family. FAD is required as a cofactor.

It carries out the reaction a D-alpha-amino acid + A + H2O = a 2-oxocarboxylate + AH2 + NH4(+). It functions in the pathway amino-acid degradation; D-alanine degradation; NH(3) and pyruvate from D-alanine: step 1/1. Its function is as follows. Oxidative deamination of D-amino acids. This chain is D-amino acid dehydrogenase, found in Granulibacter bethesdensis (strain ATCC BAA-1260 / CGDNIH1).